The chain runs to 425 residues: Putative nucleoside transporter YegT (425 aa).

At 1-8 (MKTTAKLS) the chain is on the periplasmic side. A helical membrane pass occupies residues 9–29 (FMMFVEWFIWGAWFVPLWLWL). Residues 30–38 (SKSGFSAGE) lie on the Cytoplasmic side of the membrane. The helical transmembrane segment at 39 to 59 (IGWSYACTAIAAILSPILVGS) threads the bilayer. The Periplasmic segment spans residues 60-63 (ITDR). Residues 64 to 84 (FFSAQKVLAVLMFAGALLMYF) traverse the membrane as a helical segment. At 85–90 (AAQQTT) the chain is on the cytoplasmic side. The chain crosses the membrane as a helical span at residues 91-111 (FAGFFPLLLAYSLTYMPTIAL). The Periplasmic portion of the chain corresponds to 112 to 131 (TNSIAFANVPDVERDFPRIR). Residues 132-152 (VMGTIGWIASGLACGFLPQIL) form a helical membrane-spanning segment. Over 153-161 (GYADISPTN) the chain is Cytoplasmic. Residues 162 to 182 (IPLLITAGSSALLGVFAFFLP) form a helical membrane-spanning segment. The Periplasmic segment spans residues 183-210 (DTPPKSTGKMDIKVMLGLDALILLRDKN). The helical transmembrane segment at 211–231 (FLVFFFCSFLFAMPLAFYYIF) threads the bilayer. Topologically, residues 232 to 244 (ANGYLTEVGMKNA) are cytoplasmic. The helical transmembrane segment at 245–265 (TGWMTLGQFSEIFFMLALPFF) threads the bilayer. Topologically, residues 266-287 (TKRFGIKKVLLLGLVTAAIRYG) are periplasmic. The helical transmembrane segment at 288–308 (FFIYGSADEYFTYALLFLGIL) threads the bilayer. Residues 309-339 (LHGVSYDFYYVTAYIYVDKKAPVHMRTAAQG) are Cytoplasmic-facing. Residues 340 to 360 (LITLCCQGFGSLLGYRLGGVM) form a helical membrane-spanning segment. Residues 361 to 379 (MEKMFAYQEPVNGLTFNWS) lie on the Periplasmic side of the membrane. Residues 380–400 (GMWTFGAVMIAIIAVLFMIFF) form a helical membrane-spanning segment. Residues 401-425 (RESDNEITAIKVDDRDIALTQGEVK) are Cytoplasmic-facing.

The protein belongs to the major facilitator superfamily. Nucleoside:H(+) symporter (NHS) (TC 2.A.1.10) family.

It is found in the cell inner membrane. In terms of biological role, could be involved in nucleoside transport. This Escherichia coli (strain K12) protein is Putative nucleoside transporter YegT (yegT).